We begin with the raw amino-acid sequence, 185 residues long: Ribosome-recycling factor (185 aa).

It belongs to the RRF family.

The protein localises to the cytoplasm. Its function is as follows. Responsible for the release of ribosomes from messenger RNA at the termination of protein biosynthesis. May increase the efficiency of translation by recycling ribosomes from one round of translation to another. The protein is Ribosome-recycling factor of Corynebacterium jeikeium (strain K411).